Here is a 380-residue protein sequence, read N- to C-terminus: MTIMRKKHPLLKMINHSFIDLPTPSNISSWWNFGSLLGVCLIIQILTGLFLAMHYTSDTTTAFSSVAHICRDVNYGWLIRYLHANGASMFFICLFIHVGRGIYYGSYMLLETWNIGIVLLLTTMATAFVGYVLPWGQMSFWGATVITNLLSAIPYIGNTLVEWIWGGFSVDKATLTRFFAFHFILPFIITALVLVHLLFLHETGSNNPSGLNSNSDKIPFHPYYTIKDLLGVLLLLMVLTILVLFFPDALGDPDNYTPANPLNTPAHXXXXXXXXXXXXXXXXIPNKLGGVXALXLSILILXXXPLLNSSKQHGLMYRPITQVLYWIFXXNLXXXXXXXXXXXXXXXXXXXQIASICYXAIIIIFMPXASMIENSMLKLH.

A run of 4 helical transmembrane segments spans residues 33 to 53 (FGSL…FLAM), 77 to 98 (WLIR…FIHV), 113 to 133 (WNIG…GYVL), and 178 to 198 (FFAF…VHLL). Residues histidine 83 and histidine 97 each contribute to the heme b site. Histidine 182 and histidine 196 together coordinate heme b. Histidine 201 is an a ubiquinone binding site. 4 helical membrane-spanning segments follow: residues 226-246 (IKDL…VLFF), 288-308 (LGGV…PLLN), 320-340 (ITQV…XXXX), and 347-367 (XXXX…IFMP).

The protein belongs to the cytochrome b family. The cytochrome bc1 complex contains 11 subunits: 3 respiratory subunits (MT-CYB, CYC1 and UQCRFS1), 2 core proteins (UQCRC1 and UQCRC2) and 6 low-molecular weight proteins (UQCRH/QCR6, UQCRB/QCR7, UQCRQ/QCR8, UQCR10/QCR9, UQCR11/QCR10 and a cleavage product of UQCRFS1). This cytochrome bc1 complex then forms a dimer. The cofactor is heme b.

Its subcellular location is the mitochondrion inner membrane. Functionally, component of the ubiquinol-cytochrome c reductase complex (complex III or cytochrome b-c1 complex) that is part of the mitochondrial respiratory chain. The b-c1 complex mediates electron transfer from ubiquinol to cytochrome c. Contributes to the generation of a proton gradient across the mitochondrial membrane that is then used for ATP synthesis. In Rhipidomys leucodactylus (White-footed climbing mouse), this protein is Cytochrome b (MT-CYB).